Here is a 412-residue protein sequence, read N- to C-terminus: Subtilisin-like protease 6 (412 aa).

The signal sequence occupies residues 1–20; the sequence is MGFITKAIPIVLAALSTVNG. A propeptide spanning residues 21 to 126 is cleaved from the precursor; that stretch reads AKILEAGPHA…VVRTSTNGTN (106 aa). The Inhibitor I9 domain occupies 36 to 120; the sequence is KYIVVMKREV…YIEPDFVVRT (85 aa). 2 N-linked (GlcNAc...) asparagine glycosylation sites follow: N123 and N126. One can recognise a Peptidase S8 domain in the interval 135-412; that stretch reads SWGLARVSSK…SKLIYNGSGK (278 aa). Residues D167 and H198 each act as charge relay system in the active site. N-linked (GlcNAc...) asparagine glycosylation is found at N252 and N264. Catalysis depends on S358, which acts as the Charge relay system. The N-linked (GlcNAc...) asparagine glycan is linked to N408.

It belongs to the peptidase S8 family.

It localises to the secreted. Secreted subtilisin-like serine protease with keratinolytic activity that contributes to pathogenicity. This Trichophyton equinum (Horse ringworm fungus) protein is Subtilisin-like protease 6 (SUB6).